Consider the following 235-residue polypeptide: Ribonuclease PH (235 aa).

Phosphate is bound by residues arginine 86 and 124 to 126; that span reads GTR.

It belongs to the RNase PH family. Homohexameric ring arranged as a trimer of dimers.

The enzyme catalyses tRNA(n+1) + phosphate = tRNA(n) + a ribonucleoside 5'-diphosphate. Phosphorolytic 3'-5' exoribonuclease that plays an important role in tRNA 3'-end maturation. Removes nucleotide residues following the 3'-CCA terminus of tRNAs; can also add nucleotides to the ends of RNA molecules by using nucleoside diphosphates as substrates, but this may not be physiologically important. Probably plays a role in initiation of 16S rRNA degradation (leading to ribosome degradation) during starvation. The protein is Ribonuclease PH of Francisella philomiragia subsp. philomiragia (strain ATCC 25017 / CCUG 19701 / FSC 153 / O#319-036).